The sequence spans 159 residues: Ribosomal RNA large subunit methyltransferase H (159 aa).

S-adenosyl-L-methionine-binding positions include Leu76, Gly108, and 127-132 (FSRMTF).

It belongs to the RNA methyltransferase RlmH family. Homodimer.

It is found in the cytoplasm. The enzyme catalyses pseudouridine(1915) in 23S rRNA + S-adenosyl-L-methionine = N(3)-methylpseudouridine(1915) in 23S rRNA + S-adenosyl-L-homocysteine + H(+). Its function is as follows. Specifically methylates the pseudouridine at position 1915 (m3Psi1915) in 23S rRNA. The protein is Ribosomal RNA large subunit methyltransferase H of Clostridioides difficile (strain 630) (Peptoclostridium difficile).